Consider the following 146-residue polypeptide: ATP synthase epsilon chain (146 aa).

It belongs to the ATPase epsilon chain family. As to quaternary structure, F-type ATPases have 2 components, CF(1) - the catalytic core - and CF(0) - the membrane proton channel. CF(1) has five subunits: alpha(3), beta(3), gamma(1), delta(1), epsilon(1). CF(0) has three main subunits: a, b and c.

It is found in the cell membrane. Functionally, produces ATP from ADP in the presence of a proton gradient across the membrane. The chain is ATP synthase epsilon chain from Lactobacillus helveticus (strain DPC 4571).